The following is a 176-amino-acid chain: uncharacterized protein (176 aa).

This is an uncharacterized protein from Treponema pallidum (strain Nichols).